A 405-amino-acid chain; its full sequence is Terpene cyclase pbrA (405 aa).

The Mg(2+) site is built by aspartate 103, glutamate 168, asparagine 229, serine 233, glutamate 237, and aspartate 241. The short motif at 103–108 (DDEISS) is the D(D/E)XX(D/E) motif element. The NSE motif motif lies at 227 to 237 (LVNDLFSFYKE). The short motif at 316–323 (EDLGGSSA) is the WxxxxxRY motif element.

This sequence belongs to the trichodiene synthase family. Requires Mg(2+) as cofactor.

Its pathway is secondary metabolite biosynthesis; terpenoid biosynthesis. Functionally, terpene cyclase; part of the gene cluster that mediates the biosynthesis of the sesquiterpenoid aspterric acid (AA), an inhibitor of dihydroxy-acid dehydratase (DHAD) effective as an herbicide. PbrA cyclizes farnesyl diphosphate (FPP) to produce (-)-daucane. The cytochrome P450 monooxygenase pbrBB then converts (-)-daucane into the alpha-epoxy carboxylate intermediate which is further converted into the tricyclic aspterric acid by the cytochrome P450 monooxygenase pbrC. In Penicillium brasilianum, this protein is Terpene cyclase pbrA.